The chain runs to 993 residues: Type II inositol 1,4,5-trisphosphate 5-phosphatase (993 aa).

The 127-residue stretch at 22 to 148 (QGVLCKGDSR…PEFEWLSRHT (127 aa)) folds into the PH domain. Composition is skewed to basic and acidic residues over residues 149–163 (CAEPDAESPKPREWN) and 294–303 (SKSDMSEKVR). 2 disordered regions span residues 149–191 (CAEP…GLED) and 236–304 (EALE…KVRS). Residues 342-668 (IQNFRFFVGT…LDKMENANIP (327 aa)) form a 5-phosphatase region. Mg(2+) contacts are provided by asparagine 355 and glutamate 383. Substrate contacts are provided by residues glutamate 383, 459–460 (NK), 582–583 (YK), and 596–598 (KCR). The interval 669–782 (SVTLSKREFC…LSVSGNYLPS (114 aa)) is ASH. The Rho-GAP domain maps to 821–993 (SQLENPMEIP…FIHQFLCGPL (173 aa)). Cysteine 990 is subject to Cysteine methyl ester. Residue cysteine 990 is the site of S-farnesyl cysteine attachment. Residues 991 to 993 (GPL) constitute a propeptide, removed in mature form.

The protein belongs to the inositol 1,4,5-trisphosphate 5-phosphatase type II family. As to quaternary structure, interacts with APPL1, PHETA1 and PHETA2. Interacts with several Rab GTPases, at least RAB1A, RAB2A, RAB5A, RAB6A, RAB8A, RAB9A and RAB33B; these interactions may play a dual role in targeting INPP5B to the specific membranes and stimulating its phosphatase activity. Interacts preferentially with non-phosphorylated RAB8A; phosphorylation of RAB8A on 'Thr-72' disrupts this interaction. Interacts with INPP5F. Isoprenylation at Cys-990 may be required for localization at the membrane. Post-translationally, may be proteolytically cleaved after Lys-320 as inferred from N-terminal protein sequence of the 75 kda form. As to expression, detected in kidney, liver, brain, lung and testis (at protein level). Detected in kidney and liver, and at lower levels in brain, lung and testis.

It localises to the cytoplasm. The protein localises to the cytosol. It is found in the endoplasmic reticulum-Golgi intermediate compartment. The protein resides in the early endosome membrane. Its subcellular location is the membrane. It localises to the cytoplasmic vesicle. The protein localises to the phagosome membrane. It catalyses the reaction a 1,2-diacyl-sn-glycero-3-phospho-(1D-myo-inositol-4,5-bisphosphate) + H2O = a 1,2-diacyl-sn-glycero-3-phospho-(1D-myo-inositol 4-phosphate) + phosphate. Hydrolyzes phosphatidylinositol 4,5-bisphosphate (PtIns(4,5)P2) and the signaling molecule phosphatidylinositol 1,4,5-trisphosphate (PtIns(1,4,5)P3), and thereby modulates cellular signaling events. In Mus musculus (Mouse), this protein is Type II inositol 1,4,5-trisphosphate 5-phosphatase (Inpp5b).